The primary structure comprises 235 residues: Ubiquinone/menaquinone biosynthesis C-methyltransferase UbiE (235 aa).

S-adenosyl-L-methionine is bound by residues Thr59, Asp84, and Ser123.

The protein belongs to the class I-like SAM-binding methyltransferase superfamily. MenG/UbiE family.

The enzyme catalyses a 2-demethylmenaquinol + S-adenosyl-L-methionine = a menaquinol + S-adenosyl-L-homocysteine + H(+). The catalysed reaction is a 2-methoxy-6-(all-trans-polyprenyl)benzene-1,4-diol + S-adenosyl-L-methionine = a 5-methoxy-2-methyl-3-(all-trans-polyprenyl)benzene-1,4-diol + S-adenosyl-L-homocysteine + H(+). The protein operates within quinol/quinone metabolism; menaquinone biosynthesis; menaquinol from 1,4-dihydroxy-2-naphthoate: step 2/2. It participates in cofactor biosynthesis; ubiquinone biosynthesis. In terms of biological role, methyltransferase required for the conversion of demethylmenaquinol (DMKH2) to menaquinol (MKH2) and the conversion of 2-polyprenyl-6-methoxy-1,4-benzoquinol (DDMQH2) to 2-polyprenyl-3-methyl-6-methoxy-1,4-benzoquinol (DMQH2). This Campylobacter jejuni subsp. jejuni serotype O:2 (strain ATCC 700819 / NCTC 11168) protein is Ubiquinone/menaquinone biosynthesis C-methyltransferase UbiE.